The following is a 514-amino-acid chain: Folylpolyglutamate synthase (514 aa).

Residue 82–85 coordinates ATP; it reads GKGS. Positions 107, 186, and 214 each coordinate Mg(2+). ATP contacts are provided by Arg-339 and Asp-355.

It belongs to the folylpolyglutamate synthase family. The cofactor is a monovalent cation.

It localises to the mitochondrion inner membrane. Its subcellular location is the mitochondrion matrix. It is found in the cytoplasm. It carries out the reaction (6S)-5,6,7,8-tetrahydrofolyl-(gamma-L-Glu)(n) + L-glutamate + ATP = (6S)-5,6,7,8-tetrahydrofolyl-(gamma-L-Glu)(n+1) + ADP + phosphate + H(+). It participates in cofactor biosynthesis; tetrahydrofolylpolyglutamate biosynthesis. Its function is as follows. Catalyzes conversion of folates to polyglutamate derivatives allowing concentration of folate compounds in the cell and the intracellular retention of these cofactors, which are important substrates for most of the folate-dependent enzymes that are involved in one-carbon transfer reactions involved in purine, pyrimidine and amino acid synthesis. The chain is Folylpolyglutamate synthase (MET7) from Candida albicans (Yeast).